We begin with the raw amino-acid sequence, 167 residues long: HTH-type transcriptional repressor YetL (167 aa).

In terms of domain architecture, HTH marR-type spans 26–160; sequence SLELFLSLFD…FVKMLGDLFE (135 aa). Residues 74–97 constitute a DNA-binding region (H-T-H motif); that stretch reads PTELAKRSNVTKATITGLLDGLAR.

In terms of assembly, homodimer. The N- and C-terminal helices from both subunits stabilize YetL dimer via extensive intersubunit interactions.

Binding to the yetM cis sequence is clearly inhibited by kaempferol, morin, apigenin and luteolin, slightly inhibited by quercetin and galangin, but no inhibition is observed with the other flavonoids. Flavonoid binding may induce conformational changes and modulate interaction with DNA. Negatively regulates yetM expression and its own expression. Binds specifically to corresponding single sites in the divergent yetL and yetM promoter regions, with higher affinity to the yetM region. Recognizes a 28-mer operator of double-stranded DNA that contains a palindromic sequence. This Bacillus subtilis (strain 168) protein is HTH-type transcriptional repressor YetL (yetL).